A 305-amino-acid chain; its full sequence is NAD kinase 2 (305 aa).

Residue aspartate 78 is the Proton acceptor of the active site. NAD(+)-binding positions include 78 to 79, 152 to 153, aspartate 182, 193 to 198, and asparagine 251; these read DG, NE, and TAYSLS.

Belongs to the NAD kinase family. A divalent metal cation is required as a cofactor.

It localises to the cytoplasm. The catalysed reaction is NAD(+) + ATP = ADP + NADP(+) + H(+). Its function is as follows. Involved in the regulation of the intracellular balance of NAD and NADP, and is a key enzyme in the biosynthesis of NADP. Catalyzes specifically the phosphorylation on 2'-hydroxyl of the adenosine moiety of NAD to yield NADP. The chain is NAD kinase 2 from Trichormus variabilis (strain ATCC 29413 / PCC 7937) (Anabaena variabilis).